A 1094-amino-acid chain; its full sequence is Potassium-transporting ATPase alpha chain 2 (1094 aa).

The span at 1 to 21 (MAGGAHRADRATGEERKEGGG) shows a compositional bias: basic and acidic residues. The interval 1–37 (MAGGAHRADRATGEERKEGGGRWRAPHSPSPPGPRGC) is disordered. A compositionally biased stretch (pro residues) spans 28–37 (SPSPPGPRGC). The Cytoplasmic portion of the chain corresponds to 56 to 157 (RYCTLLLFQR…NALTPPKQTP (102 aa)). A helical transmembrane segment spans residues 158–178 (EIIKFLKQMVGGFSILLWVGA). Over 179–201 (VLCWIAFGIQYVSNPSASLDRVY) the chain is Lumenal. A helical transmembrane segment spans residues 202–222 (LGTVLAVVVILTGIFAYYQEA). Residues 223 to 358 (KSTNIMASFC…NEKTPIAIEI (136 aa)) are Cytoplasmic-facing. The segment at 286–305 (SSLTGESEPQSRSSGFTHEN) is disordered. The chain crosses the membrane as a helical span at residues 359–378 (EHFVHIVAGVAVSVGILFFI). The Lumenal portion of the chain corresponds to 379–390 (IAVCMKYHVLDA). Residues 391 to 408 (IIFLIAIIVANVPEGLLA) traverse the membrane as a helical segment. Residues 409-842 (TVTVALSLTA…EEGRLIFDNL (434 aa)) are Cytoplasmic-facing. D446 functions as the 4-aspartylphosphate intermediate in the catalytic mechanism. D787 and D791 together coordinate Mg(2+). The chain crosses the membrane as a helical span at residues 843–862 (KKTIAYTLTKNIAELCPFLI). The Lumenal segment spans residues 863–872 (YIILGLPLPI). The chain crosses the membrane as a helical span at residues 873–893 (GTITLLFIDLGTDIIPSIALA). Residues 894–913 (YEKAESDIMNRKPRHKKKDR) are Cytoplasmic-facing. Residues 914–936 (LVNQQLAVYSYLHIGLMQALGAF) form a helical membrane-spanning segment. Residues 937 to 988 (LVYFTVYAQQGFRPTSLFHLRIAWDSDHLNDLEDNYGQEWTSYQRQYLEWTG) are Lumenal-facing. A helical transmembrane segment spans residues 989–1008 (YTAFFVGIMVQQIADLIIRK). Residues 1009–1022 (TRKNSIFKQGLFRN) lie on the Cytoplasmic side of the membrane. A Phosphoserine; by PKA modification is found at S1013. A helical transmembrane segment spans residues 1023 to 1041 (KVIWVGIASQIIVALLLSY). Residues 1042–1056 (GLGSITALNFTMLKA) are Lumenal-facing. A helical membrane pass occupies residues 1057–1077 (QYWFVAVPHAILIWVYDEMRK). Topologically, residues 1078-1094 (LFIRLYPGSWWDKNMYY) are cytoplasmic.

It belongs to the cation transport ATPase (P-type) (TC 3.A.3) family. Type IIC subfamily. The X(+)/K(+) ATPase pump is composed of a catalytic alpha subunit and an auxiliary non-catalytic beta subunit. The alpha subunit pairs with the beta subunit of gastric H(+)/K(+) ATPase ATP4B or the beta subunit of Na(+)/K(+) ATPases ATP1B1 and ATP1B3; this interaction is required for the formation of a functionally active pump and its targeting at the plasma membrane. In terms of tissue distribution, found in the skin, kidney, distal colon and brain. In the kidney it is found in the connecting tubule, cortical collecting duct and outer medullary collecting duct while in the brain it is specific to choroid plexus and cortex.

The protein resides in the apical cell membrane. It carries out the reaction K(+)(out) + ATP + H2O + H(+)(in) = K(+)(in) + ADP + phosphate + 2 H(+)(out). The catalysed reaction is K(+)(out) + Na(+)(in) + ATP + H2O = K(+)(in) + Na(+)(out) + ADP + phosphate + H(+). The catalytic subunit of a H(+)/K(+) ATPase and/or Na(+)/K(+) ATPase pump which transports K(+) ions in exchange for Na(+) and/or H(+) ions across the apical membrane of epithelial cells. Uses ATP as an energy source to pump K(+) ions into the cell while transporting Na(+) and/or H(+) ions to the extracellular compartment. Involved in the maintenance of electrolyte homeostasis through K(+) ion absorption in kidney and colon. In the airway epithelium, may play a primary role in mucus acidification regulating its viscosity and clearance. The polypeptide is Potassium-transporting ATPase alpha chain 2 (ATP12A) (Oryctolagus cuniculus (Rabbit)).